Reading from the N-terminus, the 451-residue chain is Phenylalanine-4-hydroxylase (451 aa).

Position 16 is a phosphoserine; by PKA (Ser-16). An ACT domain is found at 35-113; it reads SLIFSLKEEV…TVHELSRDKK (79 aa). Fe cation is bound by residues His-284, His-289, and Glu-329.

Belongs to the biopterin-dependent aromatic amino acid hydroxylase family. Homodimer and homotetramer. Requires Fe(2+) as cofactor. Phosphorylation at Ser-16 increases basal activity and facilitates activation by the substrate phenylalanine.

The catalysed reaction is (6R)-L-erythro-5,6,7,8-tetrahydrobiopterin + L-phenylalanine + O2 = (4aS,6R)-4a-hydroxy-L-erythro-5,6,7,8-tetrahydrobiopterin + L-tyrosine. It functions in the pathway amino-acid degradation; L-phenylalanine degradation; acetoacetate and fumarate from L-phenylalanine: step 1/6. With respect to regulation, N-terminal region of PAH is thought to contain allosteric binding sites for phenylalanine and to constitute an 'inhibitory' domain that regulates the activity of a catalytic domain in the C-terminal portion of the molecule. Functionally, catalyzes the hydroxylation of L-phenylalanine to L-tyrosine. This is Phenylalanine-4-hydroxylase (PAH) from Bos taurus (Bovine).